The chain runs to 1219 residues: MMMRDGNISGPKKKKFTTKCRPFSFYKNRHIIMLINDESVYLYNLTLKPPSYYISSIVGQFYKQDNSTKNAQQLVLVSSTTLQLFEINEEAGKLELQSSQNLLGIINSIEKICLSEVDGVVITSDSGNLSILQYDNKTKKFISKIQEPMTKNGWGRNYVGENLAIDPENRCILVAAMEKNKLFYKIESNSSGSKELSSPLEAHSKQVLCLKIVALNTDHNNPLFGALELTPEKKCIINYYELDQGLNHVVKKKPNSSNSDPLPNDVNYLIPLPGHIGGMVVCGTNWCFYDKLDGPRIYLPLPRRNGQTQDSIIVNHVTHVLKKKKFFILLQNALGDLFKLTVDYDFDKEIIKNISITYFDTIPPALSLNIFKNGFLFANVLNNDKLLYQFEKLGDDLTEGELVINSSDYESLNSVRESVTSFKLKGLDNLALIDVLETLSPITDSKIIDSKLVTLSSHSYVKSITHGVPTTTLVESPLPITPTDIFTTKLSLESANDEYLVISSSLSSKTLVLSIGEVVEDVEDSEFVLDQPTIAVQQVGIASVVQIYSNGIKHVRTVNGNKKTTDWFPPAGITITHATTNNQQVLIALSNLSVVYFEIDATDDQLIEYQDRLEIATTITAMAIQENISEKSPFAIIGCSDETIQVVSLQEHNCLEIKSLQALSANSSSLKMLKSSGKETHVHIGMENGVYARIKIDTINGNLSNSRVKYIGSKPVSLSVIKFSNEIEGILAISSAPWISYLYRDSFKITPLLEIDITNGSSFISEDIGGEGIVGIKDNNLIIFSVGKEDSVFDPSQDLTIATTKLRYTPRKMITNGNRLFISESEYNVQGPFKCNINGDVKENVDEDYYEAFGYEWKQNSWASCIQVVDSKSNQVIQSLQLDGNESIVSMSAVSFNKTSTPSVPASHLVVGVCTNQTILPNSYDKSYLYTFKIGKKHLQLVHKTELDHIPQVLENFQDKLLVASGNHIRLYDIGQKQLLKKSTTIIDFSTNINKIIPQTNRIIICDSHKSSIVFAKFDESQNQFVPFADDVMKRQITSIMNLDIDTLIGGDKFGNIFVTRIDEDISKQADDDWTILKTQDGILNSCPYKLQNLIEFHIGDIITSFNLGCLNLAGTESVIYTGLQGTIGLLIPLVSKSEVELLFNLQLYMQQSQNNLVGKDHLKLRSYYNPIKNVIDGDLLERFLEFDISLKIEISRKLNKSVNDIEKKLIDLRNRSAF.

The protein belongs to the RSE1 family. In terms of assembly, associated with the spliceosome.

It is found in the nucleus. In terms of biological role, involved in pre-mRNA splicing and cell cycle control. This chain is Pre-mRNA-splicing factor RSE1 (RSE1), found in Candida albicans (strain SC5314 / ATCC MYA-2876) (Yeast).